A 123-amino-acid polypeptide reads, in one-letter code: Ig heavy chain V region HPCM6 (123 aa).

The Ig-like domain maps to 1–114 (EVKLVESGGG…YPHWYFDVWG (114 aa)).

In Mus musculus (Mouse), this protein is Ig heavy chain V region HPCM6.